The chain runs to 156 residues: Small ribosomal subunit protein uS7 (156 aa).

It belongs to the universal ribosomal protein uS7 family. Part of the 30S ribosomal subunit. Contacts proteins S9 and S11.

Its function is as follows. One of the primary rRNA binding proteins, it binds directly to 16S rRNA where it nucleates assembly of the head domain of the 30S subunit. Is located at the subunit interface close to the decoding center, probably blocks exit of the E-site tRNA. The sequence is that of Small ribosomal subunit protein uS7 from Bacillus velezensis (strain DSM 23117 / BGSC 10A6 / LMG 26770 / FZB42) (Bacillus amyloliquefaciens subsp. plantarum).